The sequence spans 141 residues: Translation initiation factor IF-1, chloroplastic (141 aa).

Residues 1–46 (MLQLCSTFRPQLLLPCQFRFTNGVLIPQINYVASNSVVNIRPMIRC) constitute a chloroplast transit peptide. The tract at residues 49-69 (ASGGRGGANRSKPAKPQVKEG) is disordered. Positions 63–138 (KPQVKEGSNK…TKGRIIFRMS (76 aa)) constitute an S1-like domain.

It belongs to the IF-1 family. In terms of assembly, component of the 30S ribosomal translation pre-initiation complex which assembles on the 30S ribosome in the order IF-2 and IF-3, IF-1 and N-formylmethionyl-tRNA(fMet); mRNA recruitment can occur at any time during PIC assembly.

It localises to the plastid. The protein localises to the chloroplast. One of the essential components for the initiation of protein synthesis. Stabilizes the binding of IF-2 and IF-3 on the 30S subunit to which N-formylmethionyl-tRNA(fMet) subsequently binds. Helps modulate mRNA selection, yielding the 30S pre-initiation complex (PIC). Upon addition of the 50S ribosomal subunit IF-1, IF-2 and IF-3 are released leaving the mature 70S translation initiation complex. This is Translation initiation factor IF-1, chloroplastic from Arabidopsis thaliana (Mouse-ear cress).